A 403-amino-acid polypeptide reads, in one-letter code: Acetate kinase (403 aa).

Asn7 contributes to the Mg(2+) binding site. An ATP-binding site is contributed by Lys14. Residue Arg90 coordinates substrate. Catalysis depends on Asp147, which acts as the Proton donor/acceptor. ATP contacts are provided by residues 207–211 (HIGNG), 283–285 (DMR), and 331–335 (GVGEN). Glu386 contributes to the Mg(2+) binding site.

This sequence belongs to the acetokinase family. In terms of assembly, homodimer. Mg(2+) serves as cofactor. The cofactor is Mn(2+).

It is found in the cytoplasm. It catalyses the reaction acetate + ATP = acetyl phosphate + ADP. Its pathway is metabolic intermediate biosynthesis; acetyl-CoA biosynthesis; acetyl-CoA from acetate: step 1/2. Its function is as follows. Catalyzes the formation of acetyl phosphate from acetate and ATP. Can also catalyze the reverse reaction. This Thermotoga petrophila (strain ATCC BAA-488 / DSM 13995 / JCM 10881 / RKU-1) protein is Acetate kinase.